The chain runs to 674 residues: 1,4-alpha-glucan branching enzyme GlgB 1 (674 aa).

Asp-336 (nucleophile) is an active-site residue. Catalysis depends on Glu-389, which acts as the Proton donor.

This sequence belongs to the glycosyl hydrolase 13 family. GlgB subfamily. In terms of assembly, monomer.

The enzyme catalyses Transfers a segment of a (1-&gt;4)-alpha-D-glucan chain to a primary hydroxy group in a similar glucan chain.. The protein operates within glycan biosynthesis; glycogen biosynthesis. Its function is as follows. Catalyzes the formation of the alpha-1,6-glucosidic linkages in glycogen by scission of a 1,4-alpha-linked oligosaccharide from growing alpha-1,4-glucan chains and the subsequent attachment of the oligosaccharide to the alpha-1,6 position. The protein is 1,4-alpha-glucan branching enzyme GlgB 1 of Clostridium perfringens (strain SM101 / Type A).